Reading from the N-terminus, the 397-residue chain is Phosphoglycerate kinase (397 aa).

Substrate-binding positions include 21–23 (DFN), Arg-37, 60–63 (HLGR), Arg-119, and Arg-152. ATP is bound by residues Lys-203, Gly-294, Glu-325, and 354-357 (GGDS).

Belongs to the phosphoglycerate kinase family. Monomer.

The protein resides in the cytoplasm. The catalysed reaction is (2R)-3-phosphoglycerate + ATP = (2R)-3-phospho-glyceroyl phosphate + ADP. Its pathway is carbohydrate degradation; glycolysis; pyruvate from D-glyceraldehyde 3-phosphate: step 2/5. The polypeptide is Phosphoglycerate kinase (Prosthecochloris aestuarii (strain DSM 271 / SK 413)).